A 121-amino-acid chain; its full sequence is Autophagy-related protein 8 (121 aa).

A lipid anchor (Phosphatidylethanolamine amidated glycine) is attached at Gly-116. The propeptide at 117-121 (DFETA) is removed in mature form.

It belongs to the ATG8 family. The C-terminal 5 residues are removed to expose Gly-116 at the C-terminus. The C-terminal Gly is then amidated with phosphatidylethanolamine by an activating system similar to that for ubiquitin.

Its subcellular location is the cytoplasmic vesicle. It localises to the autophagosome membrane. The protein localises to the vacuole membrane. In terms of biological role, ubiquitin-like modifier involved in autophagosome formation. With cpr-1/atg4, mediates the delivery of the autophagosomes to the vacuole via the microtubule cytoskeleton. Required for selective autophagic degradation of the nucleus (nucleophagy) as well as for mitophagy which contributes to regulate mitochondrial quantity and quality by eliminating the mitochondria to a basal level to fulfill cellular energy requirements and preventing excess ROS production. Also participates in membrane fusion events that take place in the early secretory pathway. Also involved in endoplasmic reticulum-specific autophagic process and is essential for the survival of cells subjected to severe ER stress. The apg-6/atg8-PE conjugate mediates tethering between adjacent membranes and stimulates membrane hemifusion, leading to expansion of the autophagosomal membrane during autophagy. This chain is Autophagy-related protein 8 (apg-6), found in Neurospora crassa (strain ATCC 24698 / 74-OR23-1A / CBS 708.71 / DSM 1257 / FGSC 987).